Consider the following 279-residue polypeptide: Elongation factor Ts (279 aa).

The segment at Thr-79–Val-82 is involved in Mg(2+) ion dislocation from EF-Tu.

The protein belongs to the EF-Ts family.

The protein localises to the cytoplasm. Its function is as follows. Associates with the EF-Tu.GDP complex and induces the exchange of GDP to GTP. It remains bound to the aminoacyl-tRNA.EF-Tu.GTP complex up to the GTP hydrolysis stage on the ribosome. The protein is Elongation factor Ts of Phytoplasma mali (strain AT).